Reading from the N-terminus, the 113-residue chain is Ig kappa chain V-II region 17S29.1 (113 aa).

The framework-1 stretch occupies residues 1–23 (DIVMTQAVFSNPVTLGTSASISC). C23 and C93 are disulfide-bonded. The segment at 24–39 (RSSKSLLHSNGITYLY) is complementarity-determining-1. Positions 40–54 (WYLQKPGQSPQLLLY) are framework-2. The tract at residues 55–61 (QMSNLAS) is complementarity-determining-2. Residues 62–93 (GVPDRFSSSGSGTDFTLRISRVEAEDVGVYYC) form a framework-3 region. Residues 94–102 (AHNLELPYT) are complementarity-determining-3. The segment at 103–112 (FGGGTKLEIK) is framework-4.

Its function is as follows. Anti-streptococcal group A carbohydrate antibody. The chain is Ig kappa chain V-II region 17S29.1 from Mus musculus (Mouse).